The sequence spans 242 residues: ATP synthase subunit a, chloroplastic (242 aa).

A run of 5 helical transmembrane segments spans residues 34–54 (GQVL…AVLG), 93–113 (VPFI…GAII), 132–152 (INTT…AGLS), 188–210 (LFGN…PLVI), and 222–242 (GSVQ…EALE).

Belongs to the ATPase A chain family. F-type ATPases have 2 components, CF(1) - the catalytic core - and CF(0) - the membrane proton channel. CF(1) has five subunits: alpha(3), beta(3), gamma(1), delta(1), epsilon(1). CF(0) has four main subunits: a, b, b' and c.

The protein localises to the plastid. Its subcellular location is the chloroplast thylakoid membrane. Functionally, key component of the proton channel; it plays a direct role in the translocation of protons across the membrane. In Trieres chinensis (Marine centric diatom), this protein is ATP synthase subunit a, chloroplastic.